Reading from the N-terminus, the 187-residue chain is 2-oxoglutarate synthase subunit KorC (187 aa).

In terms of assembly, heterotetramer of the KorA, KorB, KorC and KorD subunits.

It carries out the reaction 2 oxidized [2Fe-2S]-[ferredoxin] + 2-oxoglutarate + CoA = succinyl-CoA + 2 reduced [2Fe-2S]-[ferredoxin] + CO2 + H(+). The sequence is that of 2-oxoglutarate synthase subunit KorC (korC) from Methanocaldococcus jannaschii (strain ATCC 43067 / DSM 2661 / JAL-1 / JCM 10045 / NBRC 100440) (Methanococcus jannaschii).